The following is a 39-amino-acid chain: Cytochrome b559 subunit beta (39 aa).

Residues Trp-14 to Ser-30 traverse the membrane as a helical segment. His-18 is a binding site for heme.

Heterodimer of an alpha subunit and a beta subunit. PSII is composed of 1 copy each of membrane proteins PsbA, PsbB, PsbC, PsbD, PsbE, PsbF, PsbH, PsbI, PsbJ, PsbK, PsbL, PsbM, PsbT, PsbX, PsbY, PsbZ, Psb30/Ycf12, at least 3 peripheral proteins of the oxygen-evolving complex and a large number of cofactors. It forms dimeric complexes. Requires heme b as cofactor. In terms of processing, the N-terminus is blocked.

The protein resides in the plastid. It localises to the chloroplast thylakoid membrane. In terms of biological role, this b-type cytochrome is tightly associated with the reaction center of photosystem II (PSII). PSII is a light-driven water:plastoquinone oxidoreductase that uses light energy to abstract electrons from H(2)O, generating O(2) and a proton gradient subsequently used for ATP formation. It consists of a core antenna complex that captures photons, and an electron transfer chain that converts photonic excitation into a charge separation. In Spinacia oleracea (Spinach), this protein is Cytochrome b559 subunit beta.